We begin with the raw amino-acid sequence, 104 residues long: Pterin-4-alpha-carbinolamine dehydratase (104 aa).

A2 bears the N-acetylalanine mark. Substrate is bound by residues 61–63 (DHH) and 78–81 (STHE).

The protein belongs to the pterin-4-alpha-carbinolamine dehydratase family. As to quaternary structure, homotetramer and homodimer. Heterotetramer with HNF1A; formed by a dimer of dimers. Interacts with HNF1B (via HNF-p1 domain); the interaction increases HNF1B transactivation activity.

It is found in the cytoplasm. The protein resides in the nucleus. The catalysed reaction is (4aS,6R)-4a-hydroxy-L-erythro-5,6,7,8-tetrahydrobiopterin = (6R)-L-erythro-6,7-dihydrobiopterin + H2O. In terms of biological role, involved in tetrahydrobiopterin biosynthesis. Seems to both prevent the formation of 7-pterins and accelerate the formation of quinonoid-BH2. Coactivator for HNF1A-dependent transcription. Regulates the dimerization of homeodomain protein HNF1A and enhances its transcriptional activity. Also acts as a coactivator for HNF1B-dependent transcription. The protein is Pterin-4-alpha-carbinolamine dehydratase (PCBD1) of Bos taurus (Bovine).